A 407-amino-acid chain; its full sequence is Frizzled/smoothened-like sans CRD protein J (407 aa).

The signal sequence occupies residues 1–23 (MKFLFSVILVIISFLGISKIVNG). The Extracellular segment spans residues 24–89 (QIACPSPFLY…WNSFNKLVKQ (66 aa)). N37 is a glycosylation site (N-linked (GlcNAc...) asparagine). The helical transmembrane segment at 90–110 (MGAVAFTCSAIIMIIYGPLMN) threads the bilayer. The Cytoplasmic segment spans residues 111-120 (RSFFKFDRHT). Residues 121 to 141 (ITVFCFALSTFFIGVSDLMFA) form a helical membrane-spanning segment. Residues 142 to 169 (TNDVDMVCPESHRYARQTDKTCATNGVL) are Extracellular-facing. A helical transmembrane segment spans residues 170-190 (FQFGWLGSVMWFAFLSIDGFF). The Cytoplasmic portion of the chain corresponds to 191–199 (RASGKKMNK). A helical transmembrane segment spans residues 200–220 (IAFAIVLASIWILNIVLSFAP). Over 221-246 (MGGDQYGAYFVGQVNCWILVKNWQYA) the chain is Extracellular. The helical transmembrane segment at 247–267 (FFWAELIVSLAIGFVGICLTI) threads the bilayer. Residues 268-285 (YSLIRKTSDGNTLKHVTP) are Cytoplasmic-facing. Residues 286–306 (LILVFLLFCQYLYMIIFYGII) form a helical membrane-spanning segment. Topologically, residues 307–354 (NEKKDHYQNILAEQVGCIFNNALAKMKVPGIVYAGECTFNETITFSSQ) are extracellular. N-linked (GlcNAc...) asparagine glycosylation occurs at N346. Residues 355 to 375 (YAFLFFVRLLGIEIFAFYLFS) form a helical membrane-spanning segment. Residues 376-407 (KETLLLIKSSYIATMFGLGDKDAYDVELEETD) are Cytoplasmic-facing.

This sequence belongs to the G-protein coupled receptor Fz/Smo family.

It is found in the membrane. The protein is Frizzled/smoothened-like sans CRD protein J (fscJ) of Dictyostelium discoideum (Social amoeba).